A 119-amino-acid chain; its full sequence is Large ribosomal subunit protein bL20 (119 aa).

The protein belongs to the bacterial ribosomal protein bL20 family.

Functionally, binds directly to 23S ribosomal RNA and is necessary for the in vitro assembly process of the 50S ribosomal subunit. It is not involved in the protein synthesizing functions of that subunit. The chain is Large ribosomal subunit protein bL20 from Streptococcus agalactiae serotype Ia (strain ATCC 27591 / A909 / CDC SS700).